The chain runs to 932 residues: Protein translocase subunit SecA (932 aa).

ATP contacts are provided by residues Gln-87, 105–109 (GEGKT), and Asp-515. Positions 916, 918, 927, and 928 each coordinate Zn(2+).

It belongs to the SecA family. Monomer and homodimer. Part of the essential Sec protein translocation apparatus which comprises SecA, SecYEG and auxiliary proteins SecDF-YajC and YidC. The cofactor is Zn(2+).

Its subcellular location is the cell inner membrane. The protein resides in the cytoplasm. It carries out the reaction ATP + H2O + cellular proteinSide 1 = ADP + phosphate + cellular proteinSide 2.. Its function is as follows. Part of the Sec protein translocase complex. Interacts with the SecYEG preprotein conducting channel. Has a central role in coupling the hydrolysis of ATP to the transfer of proteins into and across the cell membrane, serving both as a receptor for the preprotein-SecB complex and as an ATP-driven molecular motor driving the stepwise translocation of polypeptide chains across the membrane. The polypeptide is Protein translocase subunit SecA (Burkholderia lata (strain ATCC 17760 / DSM 23089 / LMG 22485 / NCIMB 9086 / R18194 / 383)).